We begin with the raw amino-acid sequence, 431 residues long: Maintenance of mitochondrial morphology protein 1 (431 aa).

Residues 1-103 (MVSALEVKSI…QLISWSFAQG (103 aa)) lie on the Lumenal side of the membrane. A helical transmembrane segment spans residues 104–124 (LIIGQLSVVIFLIFFVKFFIF). The Cytoplasmic portion of the chain corresponds to 125–431 (TDASSKMDNP…EDESSKTPHS (307 aa)). Residues 192-404 (SAESLDWFNV…EPRFQSVKLP (213 aa)) enclose the SMP-LTD domain. Residues 412–431 (NTREEVIHKTEDESSKTPHS) form a disordered region.

This sequence belongs to the MMM1 family. In terms of assembly, homodimer. Component of the ER-mitochondria encounter structure (ERMES) or MDM complex, composed of MMM1, MDM10, MDM12 and MDM34. An MMM1 homodimer associates with one molecule of MDM12 on each side in a pairwise head-to-tail manner, and the SMP-LTD domains of MMM1 and MDM12 generate a continuous hydrophobic tunnel for phospholipid trafficking.

It localises to the endoplasmic reticulum membrane. Functionally, component of the ERMES/MDM complex, which serves as a molecular tether to connect the endoplasmic reticulum (ER) and mitochondria. Components of this complex are involved in the control of mitochondrial shape and protein biogenesis, and function in nonvesicular lipid trafficking between the ER and mitochondria. The MDM12-MMM1 subcomplex functions in the major beta-barrel assembly pathway that is responsible for biogenesis of all outer membrane beta-barrel proteins, and acts in a late step after the SAM complex. The MDM10-MDM12-MMM1 subcomplex further acts in the TOM40-specific pathway after the action of the MDM12-MMM1 complex. Essential for establishing and maintaining the structure of mitochondria and maintenance of mtDNA nucleoids. The polypeptide is Maintenance of mitochondrial morphology protein 1 (Candida glabrata (strain ATCC 2001 / BCRC 20586 / JCM 3761 / NBRC 0622 / NRRL Y-65 / CBS 138) (Yeast)).